Here is a 327-residue protein sequence, read N- to C-terminus: Pumilio homolog 18 (327 aa).

The 324-residue stretch at 1-324 (MAVADNPFSM…NIANILDSFR (324 aa)) folds into the PUM-HD domain. Pumilio repeat units follow at residues 79-114 (SDSDYFMSIVTTKFGSRRVQKLLGKSDDVDAFFCAA), 115-149 (ILRRFLHITTDKYASYVTIRAMVVFDKVMKKALYE), 150-185 (RILYHALDLACDQHGCIALNDIITDADDPYYRDQLL), 186-222 (ELVASNALRLSNDASGNFVVQHVLTLYDSRCIHNIAV), 223-260 (NLYGQCIELSFKKYGSYIVEKLLEVEESMVVVVVELLG), and 261-295 (CDGDRLMRLARNEFGNFVVVKALRFTKMSRMDLFW).

It is found in the cytoplasm. In terms of biological role, sequence-specific RNA-binding protein that regulates translation and mRNA stability by binding the 3'-UTR of target mRNAs. This Arabidopsis thaliana (Mouse-ear cress) protein is Pumilio homolog 18 (APUM18).